The chain runs to 513 residues: GMP synthase [glutamine-hydrolyzing] (513 aa).

The region spanning 8–198 is the Glutamine amidotransferase type-1 domain; sequence MILVLDFGSQ…VFGVCECEGE (191 aa). Cysteine 85 (nucleophile) is an active-site residue. Residues histidine 172 and glutamate 174 contribute to the active site. Positions 199–388 constitute a GMPS ATP-PPase domain; that stretch reads WSMENFIEIE…LGIPDEIVWR (190 aa). 227–233 lines the ATP pocket; the sequence is GGVDSSV.

Homodimer.

It carries out the reaction XMP + L-glutamine + ATP + H2O = GMP + L-glutamate + AMP + diphosphate + 2 H(+). The protein operates within purine metabolism; GMP biosynthesis; GMP from XMP (L-Gln route): step 1/1. In terms of biological role, catalyzes the synthesis of GMP from XMP. The protein is GMP synthase [glutamine-hydrolyzing] (guaA) of Bacillus subtilis (strain 168).